The chain runs to 356 residues: Alanine racemase, catabolic (356 aa).

The active-site Proton acceptor; specific for D-alanine is lysine 35. Lysine 35 carries the N6-(pyridoxal phosphate)lysine modification. Arginine 130 is a substrate binding site. The active-site Proton acceptor; specific for L-alanine is the tyrosine 253. A substrate-binding site is contributed by methionine 301.

The protein belongs to the alanine racemase family. It depends on pyridoxal 5'-phosphate as a cofactor.

It catalyses the reaction L-alanine = D-alanine. Isomerizes L-alanine to D-alanine which is then oxidized to pyruvate by DadA. This chain is Alanine racemase, catabolic (dadX), found in Escherichia coli O6:H1 (strain CFT073 / ATCC 700928 / UPEC).